The sequence spans 461 residues: Bifunctional protein HldE (461 aa).

The ribokinase stretch occupies residues 1 to 312 (MLEFLSQQKP…IKSFKRVDFE (312 aa)). 191–194 (NKKE) contacts ATP. Residue Asp259 is part of the active site. A cytidylyltransferase region spans residues 334-461 (FTNGCFDIVH…KIIEKIKDKK (128 aa)).

It in the N-terminal section; belongs to the carbohydrate kinase PfkB family. The protein in the C-terminal section; belongs to the cytidylyltransferase family. As to quaternary structure, homodimer.

It catalyses the reaction D-glycero-beta-D-manno-heptose 7-phosphate + ATP = D-glycero-beta-D-manno-heptose 1,7-bisphosphate + ADP + H(+). The catalysed reaction is D-glycero-beta-D-manno-heptose 1-phosphate + ATP + H(+) = ADP-D-glycero-beta-D-manno-heptose + diphosphate. It functions in the pathway nucleotide-sugar biosynthesis; ADP-L-glycero-beta-D-manno-heptose biosynthesis; ADP-L-glycero-beta-D-manno-heptose from D-glycero-beta-D-manno-heptose 7-phosphate: step 1/4. It participates in nucleotide-sugar biosynthesis; ADP-L-glycero-beta-D-manno-heptose biosynthesis; ADP-L-glycero-beta-D-manno-heptose from D-glycero-beta-D-manno-heptose 7-phosphate: step 3/4. The protein operates within bacterial outer membrane biogenesis; LOS core biosynthesis. Catalyzes the phosphorylation of D-glycero-D-manno-heptose 7-phosphate at the C-1 position to selectively form D-glycero-beta-D-manno-heptose-1,7-bisphosphate. Its function is as follows. Catalyzes the ADP transfer from ATP to D-glycero-beta-D-manno-heptose 1-phosphate, yielding ADP-D-glycero-beta-D-manno-heptose. This Campylobacter jejuni subsp. jejuni serotype O:2 (strain ATCC 700819 / NCTC 11168) protein is Bifunctional protein HldE (hldE).